The primary structure comprises 533 residues: AAA-ATPase At5g17740 (533 aa).

Residues 11–27 (ASMFSTYASMMGYVMII) form a helical membrane-spanning segment. Residue 252 to 259 (GPPGTGKS) participates in ATP binding.

Belongs to the AAA ATPase family. BCS1 subfamily. Requires Mg(2+) as cofactor.

It is found in the membrane. The catalysed reaction is ATP + H2O = ADP + phosphate + H(+). The polypeptide is AAA-ATPase At5g17740 (Arabidopsis thaliana (Mouse-ear cress)).